The primary structure comprises 494 residues: Alpha-amylase-related protein (494 aa).

The signal sequence occupies residues 1 to 20 (MIKFALALTLCLAGASLSLA). Gln21 is subject to Pyrrolidone carboxylic acid. A disulfide bridge connects residues Cys48 and Cys104. 3 residues coordinate Ca(2+): Asn118, Gln169, and Asp178. A disulfide bridge links Cys157 with Cys171. Residue Arg206 participates in chloride binding. Asp208 acts as the Nucleophile in catalysis. His212 contributes to the Ca(2+) binding site. Glu245 functions as the Proton donor in the catalytic mechanism. Chloride contacts are provided by Asn308 and Arg343. 3 cysteine pairs are disulfide-bonded: Cys376–Cys382, Cys418–Cys441, and Cys448–Cys460.

It belongs to the glycosyl hydrolase 13 family. In terms of assembly, monomer. Ca(2+) is required as a cofactor. The cofactor is chloride.

Its subcellular location is the secreted. The catalysed reaction is Endohydrolysis of (1-&gt;4)-alpha-D-glucosidic linkages in polysaccharides containing three or more (1-&gt;4)-alpha-linked D-glucose units.. The polypeptide is Alpha-amylase-related protein (Amyrel) (Drosophila jambulina (Fruit fly)).